A 437-amino-acid polypeptide reads, in one-letter code: MKAKGNQKTKVNIVTLGCSKNLVDSENLLTQLRGNGIEAEHESKNDNSNVVVINTCGFIDNAKQESIDTILRYIDAKENGLIDKIYVSGCLSQRYKDDMEREMPQVDAFFGSNELPAILKKFRADYKHELVGERLLTTPSHYAYVKIAEGCDRPCSFCAIPVMRGKHVSTPMEDLVKQAKGMAAKGTKELILIAQDLTYYGLDIYKKRNLSDLLKNLSDVEGIDWIRLQYAYPSGFPLDVLDVMAERSNICKYIDMPLQHGSSDMLKLMRRGIDRPKTEDLIKTIRDKVPGIAFRTTMIIGHPGETEKDFDELCSFVEEQRFDRLGAFTYSHEEHTHSYSMEDTIPQEEKEERQATIMSIQEGISAELNEKKIGNTYKVLFDRKEGGYFIGRTEHDSPEVDNEVMVSAKDQYVRIGDFANVKINDAAEFDLFGEIVK.

Residues 9–124 (TKVNIVTLGC…LPAILKKFRA (116 aa)) form the MTTase N-terminal domain. [4Fe-4S] cluster is bound by residues cysteine 18, cysteine 56, cysteine 90, cysteine 151, cysteine 155, and cysteine 158. The region spanning 137 to 367 (TTPSHYAYVK…MSIQEGISAE (231 aa)) is the Radical SAM core domain. The 68-residue stretch at 370–437 (EKKIGNTYKV…EFDLFGEIVK (68 aa)) folds into the TRAM domain.

The protein belongs to the methylthiotransferase family. RimO subfamily. The cofactor is [4Fe-4S] cluster.

It localises to the cytoplasm. It catalyses the reaction L-aspartate(89)-[ribosomal protein uS12]-hydrogen + (sulfur carrier)-SH + AH2 + 2 S-adenosyl-L-methionine = 3-methylsulfanyl-L-aspartate(89)-[ribosomal protein uS12]-hydrogen + (sulfur carrier)-H + 5'-deoxyadenosine + L-methionine + A + S-adenosyl-L-homocysteine + 2 H(+). Functionally, catalyzes the methylthiolation of an aspartic acid residue of ribosomal protein uS12. The polypeptide is Ribosomal protein uS12 methylthiotransferase RimO (Cytophaga hutchinsonii (strain ATCC 33406 / DSM 1761 / CIP 103989 / NBRC 15051 / NCIMB 9469 / D465)).